Reading from the N-terminus, the 240-residue chain is MRRIKVIFFDLDDTLVDTSKLAEVARKNAIENMIRHGMPVDFDTAYNELLELIKEYGSNFPYHFDYLLRRLDLEYNPKWVAAGVIAYHNTKFTYLREVPGARKTLLRLKKEGYMTGIITDGNPIKQWEKILRLELDDFFEHVMISDFEGVKKPHPKIFKKALKAFNVKPEEAIMVGDRLYSDIYGAKNVGMKTVWFKYGKYAELDLEYKEYADYVITELPQLLEVLERENGSDKEVHSSG.

This sequence belongs to the HAD-like hydrolase superfamily. Mg(2+) is required as a cofactor.

Functionally, catalyzes the dephosphorylation of D,L-glyceraldehyde 3-phosphate in vitro. The chain is Glyceraldehyde 3-phosphate phosphatase from Pyrococcus furiosus (strain ATCC 43587 / DSM 3638 / JCM 8422 / Vc1).